A 252-amino-acid chain; its full sequence is Small ribosomal subunit protein uS2A (252 aa).

The residue at position 2 (serine 2) is an N-acetylserine. The disordered stretch occupies residues 209-252; it reads EVEQQVAEEATTEEAGEEEAKEEVTEEQAEATEWAEENADNVEW. The span at 218–252 shows a compositional bias: acidic residues; it reads ATTEEAGEEEAKEEVTEEQAEATEWAEENADNVEW.

This sequence belongs to the universal ribosomal protein uS2 family. As to quaternary structure, component of the small ribosomal subunit. Mature ribosomes consist of a small (40S) and a large (60S) subunit. The 40S subunit contains about 33 different proteins and 1 molecule of RNA (18S). The 60S subunit contains about 49 different proteins and 3 molecules of RNA (25S, 5.8S and 5S). Interacts with RPS21.

The protein localises to the cytoplasm. Its function is as follows. Required for the assembly and/or stability of the 40S ribosomal subunit. Required for the processing of the 20S rRNA-precursor to mature 18S rRNA in a late step of the maturation of 40S ribosomal subunits. The protein is Small ribosomal subunit protein uS2A of Saccharomyces cerevisiae (strain RM11-1a) (Baker's yeast).